The chain runs to 88 residues: Small ribosomal subunit protein bS20 (88 aa).

The interval 1–28 (MANIKSQIKRNRQNEKRRLRNKSVKSSL) is disordered. The segment covering 7-23 (QIKRNRQNEKRRLRNKS) has biased composition (basic residues).

The protein belongs to the bacterial ribosomal protein bS20 family.

In terms of biological role, binds directly to 16S ribosomal RNA. The protein is Small ribosomal subunit protein bS20 of Salinispora tropica (strain ATCC BAA-916 / DSM 44818 / JCM 13857 / NBRC 105044 / CNB-440).